Reading from the N-terminus, the 1379-residue chain is DNA-directed RNA polymerase subunit beta'' (1379 aa).

Zn(2+)-binding residues include cysteine 220, cysteine 293, cysteine 300, and cysteine 303.

This sequence belongs to the RNA polymerase beta' chain family. RpoC2 subfamily. As to quaternary structure, in plastids the minimal PEP RNA polymerase catalytic core is composed of four subunits: alpha, beta, beta', and beta''. When a (nuclear-encoded) sigma factor is associated with the core the holoenzyme is formed, which can initiate transcription. It depends on Zn(2+) as a cofactor.

It localises to the plastid. It is found in the chloroplast. It carries out the reaction RNA(n) + a ribonucleoside 5'-triphosphate = RNA(n+1) + diphosphate. Its function is as follows. DNA-dependent RNA polymerase catalyzes the transcription of DNA into RNA using the four ribonucleoside triphosphates as substrates. This is DNA-directed RNA polymerase subunit beta'' from Crucihimalaya wallichii (Rock-cress).